The following is a 245-amino-acid chain: NADH-quinone oxidoreductase subunit C (245 aa).

Basic and acidic residues predominate over residues 1 to 10 (MNAPQDRTDD). 2 disordered regions span residues 1 to 54 (MNAP…GYGG) and 217 to 245 (QRKDYPLGGVPVEYKGAEIPPPDRRRSYQ). The segment covering 11 to 28 (GGVPVPVTPAGATGGAPA) has biased composition (low complexity). Positions 39–54 (GMFGDQGTGDVSGYGG) are enriched in gly residues.

The protein belongs to the complex I 30 kDa subunit family. As to quaternary structure, NDH-1 is composed of 14 different subunits. Subunits NuoB, C, D, E, F, and G constitute the peripheral sector of the complex.

The protein localises to the cell membrane. It carries out the reaction a quinone + NADH + 5 H(+)(in) = a quinol + NAD(+) + 4 H(+)(out). NDH-1 shuttles electrons from NADH, via FMN and iron-sulfur (Fe-S) centers, to quinones in the respiratory chain. The immediate electron acceptor for the enzyme in this species is believed to be a menaquinone. Couples the redox reaction to proton translocation (for every two electrons transferred, four hydrogen ions are translocated across the cytoplasmic membrane), and thus conserves the redox energy in a proton gradient. The polypeptide is NADH-quinone oxidoreductase subunit C (Salinispora arenicola (strain CNS-205)).